The primary structure comprises 187 residues: MIAEAMAQEPGSELISETQVPDAEHAGGFPPFDAASFESQLVWLVLSFAALYLLMSRVALPRIANVLEERRDRIADDLDQAAQFQLQTEEAIGAYEKALAEARAKAQGIAQETRDRLQEETERQRLAIEARLAEKISEAEKQIAATKDAALQNVRAVAVDVADTIVAQLLGDSDRSATERAVDTELS.

A helical membrane pass occupies residues 39-61 (SQLVWLVLSFAALYLLMSRVALP).

This sequence belongs to the ATPase B chain family. As to quaternary structure, F-type ATPases have 2 components, F(1) - the catalytic core - and F(0) - the membrane proton channel. F(1) has five subunits: alpha(3), beta(3), gamma(1), delta(1), epsilon(1). F(0) has three main subunits: a(1), b(2) and c(10-14). The alpha and beta chains form an alternating ring which encloses part of the gamma chain. F(1) is attached to F(0) by a central stalk formed by the gamma and epsilon chains, while a peripheral stalk is formed by the delta and b chains.

The protein resides in the cell inner membrane. Functionally, f(1)F(0) ATP synthase produces ATP from ADP in the presence of a proton or sodium gradient. F-type ATPases consist of two structural domains, F(1) containing the extramembraneous catalytic core and F(0) containing the membrane proton channel, linked together by a central stalk and a peripheral stalk. During catalysis, ATP synthesis in the catalytic domain of F(1) is coupled via a rotary mechanism of the central stalk subunits to proton translocation. In terms of biological role, component of the F(0) channel, it forms part of the peripheral stalk, linking F(1) to F(0). The chain is ATP synthase subunit b 2 from Parvibaculum lavamentivorans (strain DS-1 / DSM 13023 / NCIMB 13966).